The following is a 473-amino-acid chain: Adenosylhomocysteinase (473 aa).

Substrate is bound by residues Thr64, Asp139, and Glu199. NAD(+) is bound at residue 200-202 (TTT). Substrate is bound by residues Lys229 and Asp233. Residues Asn234, 263 to 268 (GYGDVG), Glu286, Asn321, 342 to 344 (IGH), and Asn387 each bind NAD(+).

This sequence belongs to the adenosylhomocysteinase family. NAD(+) is required as a cofactor.

The protein localises to the cytoplasm. It carries out the reaction S-adenosyl-L-homocysteine + H2O = L-homocysteine + adenosine. It participates in amino-acid biosynthesis; L-homocysteine biosynthesis; L-homocysteine from S-adenosyl-L-homocysteine: step 1/1. Functionally, may play a key role in the regulation of the intracellular concentration of adenosylhomocysteine. This is Adenosylhomocysteinase from Paraburkholderia xenovorans (strain LB400).